A 943-amino-acid polypeptide reads, in one-letter code: U3 small nucleolar RNA-associated protein 12 (943 aa).

10 WD repeats span residues 77–107 (AKPAECTYLEAHKDTDLLAVGYADGVIKVWD), 119–149 (GHKAAITLLQFDGTGTRLISGSKDSNIIVWD), 161–190 (SHKDSITGFWCQGEDWLISTSKDGMIKLWD), 202–230 (AHTGECWGLAVKDDLLITTGTDSQVKIWK), 389–418 (GQRTDVRSIDISDDNKLLATASNGSLKIWN), 428–458 (FECGYALTCKFLPGGLLVILGTRNGELQLFD), 471–501 (AHDAAIWSLDLTSDGKRLVTGSADKTVKFWD), 571–601 (GHKLPVLSIDISFDSKMIITSSADKNIKIWG), 613–643 (AHQDSIMNVKFLPQSHNFFSCSKDAVVKYWD), and 655–685 (AHQSEVWALAVATDGGFVVSSSHDHSIRIWE). Residues 715–739 (EGNGDDAFKADASGEGVEDEASGVH) are disordered.

It belongs to the WD repeat WDR3/UTP12 family. Interacts with snoRNA U3. Interacts with MPP10. Component of the ribosomal small subunit (SSU) processome composed of at least 40 protein subunits and snoRNA U3.

The protein localises to the nucleus. It is found in the nucleolus. Involved in nucleolar processing of pre-18S ribosomal RNA. This Saccharomyces cerevisiae (strain ATCC 204508 / S288c) (Baker's yeast) protein is U3 small nucleolar RNA-associated protein 12 (DIP2).